Reading from the N-terminus, the 154-residue chain is Ribosomal RNA large subunit methyltransferase H (154 aa).

S-adenosyl-L-methionine-binding positions include Gly-103 and 122–127 (FSKLTF).

It belongs to the RNA methyltransferase RlmH family. In terms of assembly, homodimer.

Its subcellular location is the cytoplasm. It carries out the reaction pseudouridine(1915) in 23S rRNA + S-adenosyl-L-methionine = N(3)-methylpseudouridine(1915) in 23S rRNA + S-adenosyl-L-homocysteine + H(+). Specifically methylates the pseudouridine at position 1915 (m3Psi1915) in 23S rRNA. The sequence is that of Ribosomal RNA large subunit methyltransferase H from Caldicellulosiruptor bescii (strain ATCC BAA-1888 / DSM 6725 / KCTC 15123 / Z-1320) (Anaerocellum thermophilum).